Reading from the N-terminus, the 160-residue chain is Ribosomal RNA large subunit methyltransferase H (160 aa).

S-adenosyl-L-methionine is bound by residues leucine 76 and glycine 108.

Belongs to the RNA methyltransferase RlmH family. In terms of assembly, homodimer.

Its subcellular location is the cytoplasm. The enzyme catalyses pseudouridine(1915) in 23S rRNA + S-adenosyl-L-methionine = N(3)-methylpseudouridine(1915) in 23S rRNA + S-adenosyl-L-homocysteine + H(+). Functionally, specifically methylates the pseudouridine at position 1915 (m3Psi1915) in 23S rRNA. In Bradyrhizobium diazoefficiens (strain JCM 10833 / BCRC 13528 / IAM 13628 / NBRC 14792 / USDA 110), this protein is Ribosomal RNA large subunit methyltransferase H.